The sequence spans 320 residues: ATP-dependent 6-phosphofructokinase (320 aa).

ATP is bound by residues glycine 11, 72–73, and 102–105; these read RY and GDGS. Aspartate 103 serves as a coordination point for Mg(2+). Substrate-binding positions include 125-127, arginine 162, 169-171, glutamate 222, arginine 243, and 249-252; these read TID, MGR, and HMQR. Aspartate 127 serves as the catalytic Proton acceptor.

This sequence belongs to the phosphofructokinase type A (PFKA) family. ATP-dependent PFK group I subfamily. Prokaryotic clade 'B1' sub-subfamily. In terms of assembly, homotetramer. Mg(2+) serves as cofactor.

The protein resides in the cytoplasm. It catalyses the reaction beta-D-fructose 6-phosphate + ATP = beta-D-fructose 1,6-bisphosphate + ADP + H(+). Its pathway is carbohydrate degradation; glycolysis; D-glyceraldehyde 3-phosphate and glycerone phosphate from D-glucose: step 3/4. Allosterically activated by ADP and other diphosphonucleosides, and allosterically inhibited by phosphoenolpyruvate. Functionally, catalyzes the phosphorylation of D-fructose 6-phosphate to fructose 1,6-bisphosphate by ATP, the first committing step of glycolysis. This is ATP-dependent 6-phosphofructokinase from Lactiplantibacillus plantarum (strain ATCC BAA-793 / NCIMB 8826 / WCFS1) (Lactobacillus plantarum).